The chain runs to 243 residues: 4-phosphopantoate--beta-alanine ligase (243 aa).

ATP is bound by residues R15, R37, 176 to 178 (DLN), and 182 to 183 (RT).

The protein belongs to the archaeal phosphopantothenate synthetase family. As to quaternary structure, homodimer.

The enzyme catalyses (R)-4-phosphopantoate + beta-alanine + ATP = (R)-4'-phosphopantothenate + AMP + diphosphate + H(+). It participates in cofactor biosynthesis; coenzyme A biosynthesis. Its function is as follows. Catalyzes the condensation of (R)-4-phosphopantoate and beta-alanine to 4'-phosphopantothenate in the CoA biosynthesis pathway. This chain is 4-phosphopantoate--beta-alanine ligase, found in Methanospirillum hungatei JF-1 (strain ATCC 27890 / DSM 864 / NBRC 100397 / JF-1).